The sequence spans 284 residues: Formamidopyrimidine-DNA glycosylase (284 aa).

Pro2 functions as the Schiff-base intermediate with DNA in the catalytic mechanism. Residue Glu3 is the Proton donor of the active site. Catalysis depends on Lys61, which acts as the Proton donor; for beta-elimination activity. DNA is bound by residues His95, Arg114, and Arg159. The FPG-type zinc-finger motif lies at 244–278; it reads WVYGRKGQPCRVCNTPIERIRLAGRSTHFCPTCQR. The active-site Proton donor; for delta-elimination activity is Arg268.

Belongs to the FPG family. As to quaternary structure, monomer. It depends on Zn(2+) as a cofactor.

The catalysed reaction is Hydrolysis of DNA containing ring-opened 7-methylguanine residues, releasing 2,6-diamino-4-hydroxy-5-(N-methyl)formamidopyrimidine.. The enzyme catalyses 2'-deoxyribonucleotide-(2'-deoxyribose 5'-phosphate)-2'-deoxyribonucleotide-DNA = a 3'-end 2'-deoxyribonucleotide-(2,3-dehydro-2,3-deoxyribose 5'-phosphate)-DNA + a 5'-end 5'-phospho-2'-deoxyribonucleoside-DNA + H(+). Its function is as follows. Involved in base excision repair of DNA damaged by oxidation or by mutagenic agents. Acts as a DNA glycosylase that recognizes and removes damaged bases. Has a preference for oxidized purines, such as 7,8-dihydro-8-oxoguanine (8-oxoG). Has AP (apurinic/apyrimidinic) lyase activity and introduces nicks in the DNA strand. Cleaves the DNA backbone by beta-delta elimination to generate a single-strand break at the site of the removed base with both 3'- and 5'-phosphates. The protein is Formamidopyrimidine-DNA glycosylase of Gloeobacter violaceus (strain ATCC 29082 / PCC 7421).